A 373-amino-acid polypeptide reads, in one-letter code: Saccharopine dehydrogenase [NAD(+), L-lysine-forming] (373 aa).

A2 is subject to N-acetylalanine; partial. L-saccharopine is bound by residues R18 and K77. The active-site Proton acceptor is the K77. H96 (proton donor) is an active-site residue. Q101 provides a ligand contact to L-saccharopine. Residue R130 coordinates NAD(+). The L-saccharopine site is built by R131 and F135. NAD(+) contacts are provided by residues 203–204 (GR), D227, T231, Y251, and V278. An intrachain disulfide couples C205 to C249. 279-281 (SAD) contributes to the L-saccharopine binding site. Residue 318–321 (IDHL) participates in NAD(+) binding. The short motif at 371-373 (SRL) is the Microbody targeting signal element.

It belongs to the AlaDH/PNT family. In terms of assembly, monomer.

The protein localises to the peroxisome. The enzyme catalyses L-saccharopine + NAD(+) + H2O = L-lysine + 2-oxoglutarate + NADH + H(+). Its pathway is amino-acid biosynthesis; L-lysine biosynthesis via AAA pathway; L-lysine from L-alpha-aminoadipate (fungal route): step 3/3. Inhibited by p-chloromercuribenzoate and iodoacetate by modification of the active site cysteine residue. Inhibited by diethyl pyrocarbonate by modification of histidine residues. Inhibited by pyridoxal 5'-phosphate by modification of an essential lysine residue. Its function is as follows. Catalyzes the NAD(+)-dependent cleavage of saccharopine to L-lysine and 2-oxoglutarate, the final step in the alpha-aminoadipate (AAA) pathway for lysine biosynthesis. The chain is Saccharopine dehydrogenase [NAD(+), L-lysine-forming] from Saccharomyces cerevisiae (strain ATCC 204508 / S288c) (Baker's yeast).